A 165-amino-acid chain; its full sequence is Nicotine 6-hydroxylase small subunit (165 aa).

A 2Fe-2S ferredoxin-type domain is found at 10 to 86 (VEIDVEVNGR…GRSIRTVEDL (77 aa)). [2Fe-2S] cluster contacts are provided by C48, C53, C56, and C68.

In terms of assembly, heterotrimer composed of a large subunit (NdhL), a medium subunit (NdhM) and a small subunit (NdhS). [2Fe-2S] cluster serves as cofactor.

Its subcellular location is the cytoplasm. It carries out the reaction (R)-nicotine + A + H2O = (R)-6-hydroxynicotine + AH2. The catalysed reaction is (S)-nicotine + A + H2O = (S)-6-hydroxynicotine + AH2. It participates in alkaloid degradation; nicotine degradation; 6-hydroxypseudooxynicotine from nicotine (R-isomer route): step 1/2. Its pathway is alkaloid degradation; nicotine degradation; 6-hydroxypseudooxynicotine from nicotine (S-isomer route): step 1/2. Its activity is regulated as follows. Nicotine dehydrogenase activity is inhibited by tungsten. Component of the nicotine 6-hydroxylase, which is involved in the degradation of nicotine. Catalyzes the hydroxylation of the pyridine ring at C6 to form 6-hydroxynicotine. Can use both L-nicotine and D-nicotine. This chain is Nicotine 6-hydroxylase small subunit, found in Paenarthrobacter nicotinovorans (Arthrobacter nicotinovorans).